The sequence spans 343 residues: MKVSIIGATGYGGLELIRLLHQHSSVDIATLHSFSAQAETLATFYPHLKDLAVSPLEKINPTEIIEKSDTVFIATPSGIAKDIALPYVDAGLNVIDLSGDFRLKDRQLYEKWYGKSAAPTEYIGKAEYGLAEFREKKETTFIANPGCYATATLLGLAPLATNKLIDPTSIIVDAKSGISGAGKVPSASTHFTETNENMTLYKMNSHQHIPEIMQQLTKWDESIPAIQFSTSLIPITRGIFTTIYVKPKNPITQKELHKLYESTYDNAPFVRIQPENVYPTVKQVTASNYCDIGLAYNEKTNVITIVSVIDNLVKGAAGQAIQNLNIMANFAESDGLRFIPVYP.

Cysteine 147 is a catalytic residue.

The protein belongs to the NAGSA dehydrogenase family. Type 1 subfamily.

The protein localises to the cytoplasm. It catalyses the reaction N-acetyl-L-glutamate 5-semialdehyde + phosphate + NADP(+) = N-acetyl-L-glutamyl 5-phosphate + NADPH + H(+). The protein operates within amino-acid biosynthesis; L-arginine biosynthesis; N(2)-acetyl-L-ornithine from L-glutamate: step 3/4. Functionally, catalyzes the NADPH-dependent reduction of N-acetyl-5-glutamyl phosphate to yield N-acetyl-L-glutamate 5-semialdehyde. This chain is N-acetyl-gamma-glutamyl-phosphate reductase, found in Listeria monocytogenes serovar 1/2a (strain ATCC BAA-679 / EGD-e).